A 166-amino-acid chain; its full sequence is Large ribosomal subunit protein uL10 (166 aa).

Belongs to the universal ribosomal protein uL10 family. As to quaternary structure, part of the ribosomal stalk of the 50S ribosomal subunit. The N-terminus interacts with L11 and the large rRNA to form the base of the stalk. The C-terminus forms an elongated spine to which L12 dimers bind in a sequential fashion forming a multimeric L10(L12)X complex.

Its function is as follows. Forms part of the ribosomal stalk, playing a central role in the interaction of the ribosome with GTP-bound translation factors. In Staphylococcus haemolyticus (strain JCSC1435), this protein is Large ribosomal subunit protein uL10.